Here is a 1046-residue protein sequence, read N- to C-terminus: Protein jim lovell (1046 aa).

The disordered stretch occupies residues 54-109 (TSDHAPMHSTPPTTPPTPPPLPLNMSQSASAVTEAATPENSLPATPPSEGALAVPS). A compositionally biased stretch (pro residues) spans 65 to 75 (PTTPPTPPPLP). In terms of domain architecture, BTB spans 140–205 (VDVTLVCAET…MYRGEISVPQ (66 aa)). Disordered stretches follow at residues 290 to 342 (LRRK…DAES), 355 to 501 (AERD…KLQD), 632 to 655 (PPFGGHNGGHPGNSGPGNGCPGQA), 686 to 719 (EFGPASPMSLQGPFNAPDGPPHPPSPLPFPGMSS), 758 to 791 (RDMPGGPPPFLKKKMPRPKGQHSAPRGGPPRSWT), 851 to 947 (EMLQ…APNA), and 998 to 1046 (DCKS…TGHD). Residues 294-303 (REQESDRDLE) show a composition bias toward basic and acidic residues. A compositionally biased stretch (basic residues) spans 315 to 324 (PRRKQARPRR). The segment covering 365–380 (QDNSQGEAEKISSSPA) has biased composition (polar residues). The span at 383 to 412 (LVERAKEQKSMKEEGSDQPRSLNENHHQLE) shows a compositional bias: basic and acidic residues. The span at 413-432 (LDDEDDDDQDHEEEEEQDIE) shows a compositional bias: acidic residues. Residues 433–443 (ELIHTTNELRR) are compositionally biased toward basic and acidic residues. The span at 445 to 454 (AAAAAANAAA) shows a compositional bias: low complexity. Residues 636 to 651 (GHNGGHPGNSGPGNGC) show a composition bias toward gly residues. Positions 703-714 (DGPPHPPSPLPF) are enriched in pro residues. Basic residues predominate over residues 768 to 777 (LKKKMPRPKG). An HTH psq-type domain is found at 781-833 (APRGGPPRSWTNTELTEALQHVWNKKMTTSQASRIFGIPYNSLLMYVRGKYGK). A compositionally biased stretch (basic and acidic residues) spans 866–881 (KNEKSKERKEKEKDKN). Composition is skewed to low complexity over residues 882 to 897 (SMSSNGSGGSANSQGG) and 912 to 925 (LGPMGQLDLDLGLP).

In terms of tissue distribution, initially expressed at blastoderm stage, transient accumulation at dorso-lateral positions of the embryo and differences along the longitudinal axis. At later stages of embryogenesis, expression is found exclusively in neural anlagen. Expressed in 4 posterior-most ventral unpaired median interneurons (VUM) neurons, VUM interneurons and one progeny of the median neuroblast (MNB).

The protein resides in the nucleus. Its function is as follows. Has a regulatory role during midline cell development. In Drosophila melanogaster (Fruit fly), this protein is Protein jim lovell (lov).